A 235-amino-acid chain; its full sequence is Protein LIFEGUARD 1 (235 aa).

Transmembrane regions (helical) follow at residues 33–53, 67–87, 95–115, 120–140, 149–169, 178–198, and 212–232; these read YSIL…VYFV, LAVF…LLAF, CIVL…CCSL, IVLE…IYTF, FSFL…FTLL, LSSM…IIFD, and ITAA…LLGI.

The protein belongs to the BI1 family. As to expression, expressed at very low in leaves.

Its subcellular location is the membrane. In terms of biological role, (Microbial infection) Facilitates the development of the powdery mildew fungus E.cruciferarum. Its function is as follows. (Microbial infection) May prevent cell death upon A.alternata f.sp. lycopersici (AAL) toxin treatment. The sequence is that of Protein LIFEGUARD 1 from Arabidopsis thaliana (Mouse-ear cress).